Consider the following 253-residue polypeptide: 3-deoxy-manno-octulosonate cytidylyltransferase (253 aa).

This sequence belongs to the KdsB family.

Its subcellular location is the cytoplasm. It catalyses the reaction 3-deoxy-alpha-D-manno-oct-2-ulosonate + CTP = CMP-3-deoxy-beta-D-manno-octulosonate + diphosphate. The protein operates within nucleotide-sugar biosynthesis; CMP-3-deoxy-D-manno-octulosonate biosynthesis; CMP-3-deoxy-D-manno-octulosonate from 3-deoxy-D-manno-octulosonate and CTP: step 1/1. It functions in the pathway bacterial outer membrane biogenesis; lipopolysaccharide biosynthesis. In terms of biological role, activates KDO (a required 8-carbon sugar) for incorporation into bacterial lipopolysaccharide in Gram-negative bacteria. The protein is 3-deoxy-manno-octulosonate cytidylyltransferase of Aeromonas hydrophila subsp. hydrophila (strain ATCC 7966 / DSM 30187 / BCRC 13018 / CCUG 14551 / JCM 1027 / KCTC 2358 / NCIMB 9240 / NCTC 8049).